Here is a 393-residue protein sequence, read N- to C-terminus: NAD(P)H-quinone oxidoreductase subunit H, chloroplastic (393 aa).

It belongs to the complex I 49 kDa subunit family. As to quaternary structure, NDH is composed of at least 16 different subunits, 5 of which are encoded in the nucleus.

The protein localises to the plastid. It localises to the chloroplast thylakoid membrane. The enzyme catalyses a plastoquinone + NADH + (n+1) H(+)(in) = a plastoquinol + NAD(+) + n H(+)(out). It catalyses the reaction a plastoquinone + NADPH + (n+1) H(+)(in) = a plastoquinol + NADP(+) + n H(+)(out). Its function is as follows. NDH shuttles electrons from NAD(P)H:plastoquinone, via FMN and iron-sulfur (Fe-S) centers, to quinones in the photosynthetic chain and possibly in a chloroplast respiratory chain. The immediate electron acceptor for the enzyme in this species is believed to be plastoquinone. Couples the redox reaction to proton translocation, and thus conserves the redox energy in a proton gradient. This is NAD(P)H-quinone oxidoreductase subunit H, chloroplastic from Ranunculus macranthus (Large buttercup).